We begin with the raw amino-acid sequence, 275 residues long: Protein FAM210A (275 aa).

Residues 51–100 (KWLHSQPKQQDTATKTPVHDLPSGIQHQSEETSPSARSSISTDPSSIAEE) are disordered. 2 stretches are compositionally biased toward polar residues: residues 56–65 (QPKQQDTATK) and 75–95 (IQHQSEETSPSARSSISTDPS). In terms of domain architecture, DUF1279 spans 105-217 (DQSIGLLKRF…GYLSTPPLVK (113 aa)). A helical membrane pass occupies residues 124 to 144 (VLIPVHLVTSSIWFGSFYYAA). Positions 221–275 (QDRMEETKELFTEKMEETRDIISGKMEETKDRISEKLQETKDRVAFRKKKNEDME) form a coiled coil.

This sequence belongs to the FAM210 family.

Its subcellular location is the membrane. It localises to the mitochondrion. The protein localises to the cytoplasm. In terms of biological role, may play a role in the structure and strength of both muscle and bone. The chain is Protein FAM210A (fam210a) from Xenopus laevis (African clawed frog).